Reading from the N-terminus, the 454-residue chain is Aspartokinase 3 (454 aa).

2 ACT domains span residues 312–388 (ISKY…ALIM) and 389–454 (VVGE…VLIS).

This sequence belongs to the aspartokinase family. Monomer.

The enzyme catalyses L-aspartate + ATP = 4-phospho-L-aspartate + ADP. It functions in the pathway amino-acid biosynthesis; L-lysine biosynthesis via DAP pathway; (S)-tetrahydrodipicolinate from L-aspartate: step 1/4. The protein operates within amino-acid biosynthesis; L-methionine biosynthesis via de novo pathway; L-homoserine from L-aspartate: step 1/3. It participates in amino-acid biosynthesis; L-threonine biosynthesis; L-threonine from L-aspartate: step 1/5. Functionally, catalyzes the phosphorylation of the beta-carboxyl group of aspartic acid with ATP to yield 4-phospho-L-aspartate, which is involved in the branched biosynthetic pathway leading to the biosynthesis of amino acids threonine, isoleucine and methionine. The sequence is that of Aspartokinase 3 (yclM) from Bacillus subtilis (strain 168).